Consider the following 559-residue polypeptide: NAD(P)H-quinone oxidoreductase chain 4-2 (559 aa).

14 consecutive transmembrane segments (helical) span residues 5 to 25 (FPWLTTMIALPLVAALFIPLI), 35 to 55 (WYALGVGLADFVLMSYVFWTN), 86 to 106 (ISMPLVLLAGLVTTLSIFAAW), 114 to 134 (LFYFLMLVLYAAQIGVFVAQD), 136 to 156 (LLLFIMWELELVPVYLLVCIW), 168 to 188 (FLLYTAAASVFILVAALGLAF), 207 to 227 (IALELFLYAGLLIAFGVKLAI), 242 to 262 (SAPVSMILAGVLLKMGGYGLI), 274 to 294 (VYFAPILVILGVVNIIYGGFS), 310 to 330 (VSHMGFVLLGIASFTDLGISG), 331 to 351 (AMLQMLSHGLIAAVLFFLAGV), 374 to 394 (VFALFTMGAMASLALPGMSGF), 417 to 437 (VTVFLAAVGLVLTPIYLLSML), and 488 to 508 (VFIAACFLLPIIAVGLYPKLA).

The protein belongs to the complex I subunit 4 family.

It localises to the cellular thylakoid membrane. The catalysed reaction is a plastoquinone + NADH + (n+1) H(+)(in) = a plastoquinol + NAD(+) + n H(+)(out). The enzyme catalyses a plastoquinone + NADPH + (n+1) H(+)(in) = a plastoquinol + NADP(+) + n H(+)(out). NDH-1 shuttles electrons from NAD(P)H, via FMN and iron-sulfur (Fe-S) centers, to quinones in the respiratory chain. The immediate electron acceptor for the enzyme in this species is believed to be plastoquinone. Couples the redox reaction to proton translocation (for every two electrons transferred, four hydrogen ions are translocated across the cytoplasmic membrane), and thus conserves the redox energy in a proton gradient. In Synechocystis sp. (strain ATCC 27184 / PCC 6803 / Kazusa), this protein is NAD(P)H-quinone oxidoreductase chain 4-2 (ndhD2).